The following is a 325-amino-acid chain: Treponemal membrane protein B (325 aa).

An N-terminal signal peptide occupies residues 1–24 (MKTRNFSLVSALYVLLGVPLFVSA). Residues 159–166 (EAARKAAE) form an EAARKAAE repeat. The ARKLEEQRIAAQKAQEERKRAEE repeat unit spans residues 167–189 (ARKLEEQRIAAQKAQEERKRAEE). The disordered stretch occupies residues 176–224 (AAQKAQEERKRAEEEAARKAAEARKLEEQRIAAQKAQEERKRAEEEAAR). Residues 190–197 (EAARKAAE) form an EAARKAAE repeat. The ARKLEEQRIAAQKAQEERKRAEE repeat unit spans residues 198–220 (ARKLEEQRIAAQKAQEERKRAEE). The EAARKAAE repeat unit spans residues 221-228 (EAARKAAE). The EAARKAEE repeat unit spans residues 229-236 (EAARKAEE).

It to T.phagedenis TmpB.

It is found in the cell outer membrane. Functionally, tmp may serve as a porin or transport protein for large molecules. In Treponema pallidum (strain Nichols), this protein is Treponemal membrane protein B (tmpB).